We begin with the raw amino-acid sequence, 967 residues long: Leucine-rich repeat-containing G-protein coupled receptor 6 (967 aa).

The first 24 residues, 1-24 (MPSPPGLRALWLCAALCASRRAGG), serve as a signal peptide directing secretion. The Extracellular portion of the chain corresponds to 25–567 (APQPGPGPTA…LFESWGIRLA (543 aa)). An LRRNT domain is found at 26–66 (PQPGPGPTACPAPCHCQEDGIMLSADCSELGLSAVPGDLDP). A glycan (N-linked (GlcNAc...) asparagine) is linked at N77. LRR repeat units lie at residues 91 to 112 (FLEELRLSGNHLSHIPGQAFSG), 115 to 136 (SLKILMLQNNQLGGIPAEALWE), 139 to 160 (SLQSLRLDANLISLVPERSFEG), 163 to 186 (SLRHLWLDDNALTEIPVRALNNLP), 187 to 208 (ALQAMTLALNRISHIPDYAFQN), 211 to 232 (SLVVLHLHNNRIQHLGTHSFEG), 235 to 256 (NLETLDLNYNKLQEFPVAIRTL), 258 to 279 (RLQELGFHNNNIKAIPEKAFMG), 282 to 303 (LLQTIHFYDNPIQFVGRSAFQY), 306 to 328 (KLHTLSLNGAMDIQEFPDLKGTT), 329 to 350 (SLEILTLTRAGIRLLPSGMCQQ), 353 to 374 (RLRVLELSHNQIEELPSLHRCQ), 375 to 396 (KLEEIGLQHNRIWEIGADTFSQ), 399 to 420 (SLQALDLSWNAIRSIHPEAFST), and 423 to 443 (SLVKLDLTDNQLTTLPLAGLG). N208 carries N-linked (GlcNAc...) asparagine glycosylation. A helical transmembrane segment spans residues 568–588 (VWAIVLLSVLCNGLVLLTVFA). At 589-598 (GGPVPLPPVK) the chain is on the cytoplasmic side. The helical transmembrane segment at 599–619 (FVVGAIAGANTLTGISCGLLA) threads the bilayer. The Extracellular portion of the chain corresponds to 620–644 (SVDALTFGQFSEYGARWETGLGCRA). C642 and C717 are disulfide-bonded. A helical transmembrane segment spans residues 645 to 665 (TGFLAVLGSEASVLLLTLAAV). The Cytoplasmic portion of the chain corresponds to 666–687 (QCSVSVSCVRAYGKSPSLGSVR). The helical transmembrane segment at 688 to 708 (AGVLGCLALAGLAAALPLASV) threads the bilayer. The Extracellular portion of the chain corresponds to 709-727 (GEYGASPLCLPYAPPEGQP). A helical transmembrane segment spans residues 728–748 (AALGFTVALVMMNSFCFLVVA). The Cytoplasmic segment spans residues 749 to 774 (GAYIKLYCDLPRGDFEAVWDCAMVRH). Residues 775-795 (VAWLIFADGLLYCPVAFLSFA) traverse the membrane as a helical segment. Over 796 to 809 (SMLGLFPVTPEAVK) the chain is Extracellular. The helical transmembrane segment at 810 to 830 (SVLLVVLPLPACLNPLLYLLF) threads the bilayer. At 831–967 (NPHFRDDLRR…PSGLAFASHV (137 aa)) the chain is on the cytoplasmic side.

The protein belongs to the G-protein coupled receptor 1 family.

It is found in the cell membrane. Its function is as follows. Receptor for R-spondins that potentiates the canonical Wnt signaling pathway and acts as a marker of multipotent stem cells in the epidermis. Upon binding to R-spondins (RSPO1, RSPO2, RSPO3 or RSPO4), associates with phosphorylated LRP6 and frizzled receptors that are activated by extracellular Wnt receptors, triggering the canonical Wnt signaling pathway to increase expression of target genes. In contrast to classical G-protein coupled receptors, does not activate heterotrimeric G-proteins to transduce the signal. May act as a tumor suppressor. The polypeptide is Leucine-rich repeat-containing G-protein coupled receptor 6 (LGR6) (Homo sapiens (Human)).